The following is a 424-amino-acid chain: Dihydroorotase-like protein (424 aa).

Belongs to the metallo-dependent hydrolases superfamily. DHOase family. PyrC' subfamily. As to quaternary structure, heterododecamer of 6 active PyrB subunits and 6 non-catalytic PyrC' subunits.

In terms of biological role, non-functional DHOase. This chain is Dihydroorotase-like protein, found in Pseudomonas putida (Arthrobacter siderocapsulatus).